The primary structure comprises 414 residues: 3-oxoacyl-[acyl-carrier-protein] synthase 2 (414 aa).

The region spanning asparagine 4–lysine 411 is the Ketosynthase family 3 (KS3) domain. Residues cysteine 165, histidine 304, and histidine 341 each act as for beta-ketoacyl synthase activity in the active site.

Belongs to the thiolase-like superfamily. Beta-ketoacyl-ACP synthases family.

The enzyme catalyses a fatty acyl-[ACP] + malonyl-[ACP] + H(+) = a 3-oxoacyl-[ACP] + holo-[ACP] + CO2. The catalysed reaction is (9Z)-hexadecenoyl-[ACP] + malonyl-[ACP] + H(+) = 3-oxo-(11Z)-octadecenoyl-[ACP] + holo-[ACP] + CO2. Its pathway is lipid metabolism; fatty acid biosynthesis. Functionally, involved in the type II fatty acid elongation cycle. Catalyzes the elongation of a wide range of acyl-ACP by the addition of two carbons from malonyl-ACP to an acyl acceptor. Can efficiently catalyze the conversion of palmitoleoyl-ACP (cis-hexadec-9-enoyl-ACP) to cis-vaccenoyl-ACP (cis-octadec-11-enoyl-ACP), an essential step in the thermal regulation of fatty acid composition. This is 3-oxoacyl-[acyl-carrier-protein] synthase 2 (fabF) from Staphylococcus aureus (strain MW2).